Reading from the N-terminus, the 37-residue chain is Photosystem II reaction center protein Y (37 aa).

A helical transmembrane segment spans residues 4–22; the sequence is AIVVFAPIIAAVAWVVFNI.

Belongs to the PsbY family. As to quaternary structure, PSII is composed of 1 copy each of membrane proteins PsbA, PsbB, PsbC, PsbD, PsbE, PsbF, PsbH, PsbI, PsbJ, PsbK, PsbL, PsbM, PsbT, PsbX, PsbY, Psb30/Ycf12, peripheral proteins PsbO, CyanoQ (PsbQ), PsbU, PsbV and a large number of cofactors. It forms dimeric complexes.

The protein localises to the cellular thylakoid membrane. Functionally, loosely associated component of the core of photosystem II (PSII), it is not always seen in crystals. PSII is a light-driven water plastoquinone oxidoreductase, using light energy to abstract electrons from H(2)O, generating a proton gradient subsequently used for ATP formation. The protein is Photosystem II reaction center protein Y of Prochlorococcus marinus (strain MIT 9312).